Consider the following 396-residue polypeptide: Elongation factor Tu 2 (396 aa).

A tr-type G domain is found at 10–206 (KPHVNVGTIG…AIDSYIPEPE (197 aa)). Residues 19–26 (GHIDHGKT) are G1. Residue 19–26 (GHIDHGKT) participates in GTP binding. A Mg(2+)-binding site is contributed by Thr-26. The G2 stretch occupies residues 60 to 64 (GITIA). The G3 stretch occupies residues 81–84 (DCPG). Residues 81–85 (DCPGH) and 136–139 (NKCD) each bind GTP. The interval 136-139 (NKCD) is G4. The G5 stretch occupies residues 174–176 (SAL).

The protein belongs to the TRAFAC class translation factor GTPase superfamily. Classic translation factor GTPase family. EF-Tu/EF-1A subfamily. Monomer.

It is found in the cytoplasm. It catalyses the reaction GTP + H2O = GDP + phosphate + H(+). GTP hydrolase that promotes the GTP-dependent binding of aminoacyl-tRNA to the A-site of ribosomes during protein biosynthesis. This is Elongation factor Tu 2 from Desulfotalea psychrophila (strain LSv54 / DSM 12343).